The following is a 379-amino-acid chain: UDP-4-amino-4-deoxy-L-arabinose--oxoglutarate aminotransferase (379 aa).

Position 182 is an N6-(pyridoxal phosphate)lysine (Lys-182).

It belongs to the DegT/DnrJ/EryC1 family. ArnB subfamily. As to quaternary structure, homodimer. Pyridoxal 5'-phosphate serves as cofactor.

It carries out the reaction UDP-4-amino-4-deoxy-beta-L-arabinose + 2-oxoglutarate = UDP-beta-L-threo-pentopyranos-4-ulose + L-glutamate. It participates in nucleotide-sugar biosynthesis; UDP-4-deoxy-4-formamido-beta-L-arabinose biosynthesis; UDP-4-deoxy-4-formamido-beta-L-arabinose from UDP-alpha-D-glucuronate: step 2/3. It functions in the pathway bacterial outer membrane biogenesis; lipopolysaccharide biosynthesis. In terms of biological role, catalyzes the conversion of UDP-4-keto-arabinose (UDP-Ara4O) to UDP-4-amino-4-deoxy-L-arabinose (UDP-L-Ara4N). The modified arabinose is attached to lipid A and is required for resistance to polymyxin and cationic antimicrobial peptides. This is UDP-4-amino-4-deoxy-L-arabinose--oxoglutarate aminotransferase from Escherichia coli O1:K1 / APEC.